The chain runs to 526 residues: Adenylyl cyclase-associated protein (526 aa).

Residues 1–168 (MPDSKYTMQG…RQSKYFAYLS (168 aa)) form an adenyl cyclase-binding region. Disordered regions lie at residues 43–72 (EASK…PEVE), 255–304 (QSTK…DANK), and 326–371 (KVDK…RPPR). Residues 45 to 64 (SKNNKPSDSGADANTTNEPS) are compositionally biased toward polar residues. An SH3-binding motif is present at residues 169 to 369 (ALSEGAPLFS…KPSTLKTKRP (201 aa)). Positions 262–274 (ATSSPSPASATAA) are enriched in low complexity. Positions 275–285 (PAPPPPPPAPP) are enriched in pro residues. Polar residues predominate over residues 290–302 (EISNDTPATSSDA). Residues 326–338 (KVDKSQQTHKNPE) show a composition bias toward basic and acidic residues. Positions 342 to 352 (SSTVSSTGSKS) are enriched in low complexity. The tract at residues 354-361 (PPPRPKKP) is interaction with SH3 domain of ABP1. Over residues 357–370 (RPKKPSTLKTKRPP) the composition is skewed to basic residues. The 136-residue stretch at 369-504 (PPRKELVGNK…EDDDYVEFPI (136 aa)) folds into the C-CAP/cofactor C-like domain. Positions 370-526 (PRKELVGNKW…FKSAVFEHAG (157 aa)) are dimerization and actin-binding. Ser454 carries the phosphoserine modification.

The protein belongs to the CAP family. As to quaternary structure, homodimer.

The protein resides in the cytoplasm. It localises to the cytoskeleton. The protein localises to the actin patch. Functionally, the N-terminal domain binds to adenylyl cyclase, thereby enabling adenylyl cyclase to be activated by upstream regulatory signals, such as Ras. The C-terminal domain is required for normal cellular morphology and growth control. The sequence is that of Adenylyl cyclase-associated protein (SRV2) from Saccharomyces cerevisiae (strain ATCC 204508 / S288c) (Baker's yeast).